We begin with the raw amino-acid sequence, 311 residues long: tRNA dimethylallyltransferase (311 aa).

11 to 18 lines the ATP pocket; it reads GPTASGKS. Substrate is bound at residue 13 to 18; that stretch reads TASGKS. Interaction with substrate tRNA stretches follow at residues 36–39 and 160–164; these read DSMQ and QRLIR.

It belongs to the IPP transferase family. In terms of assembly, monomer. Mg(2+) serves as cofactor.

The enzyme catalyses adenosine(37) in tRNA + dimethylallyl diphosphate = N(6)-dimethylallyladenosine(37) in tRNA + diphosphate. In terms of biological role, catalyzes the transfer of a dimethylallyl group onto the adenine at position 37 in tRNAs that read codons beginning with uridine, leading to the formation of N6-(dimethylallyl)adenosine (i(6)A). The sequence is that of tRNA dimethylallyltransferase from Rickettsia prowazekii (strain Madrid E).